The sequence spans 611 residues: Conglutin beta 1 (611 aa).

Positions 1-30 are cleaved as a signal peptide; the sequence is MAKMRVRLPMLILLLGVVFLLAASIGIAYG. Composition is skewed to basic and acidic residues over residues 32-82 and 130-141; these read KDFT…RSQS and SRREEREEREQE. 2 disordered regions span residues 32-194 and 384-407; these read KDFT…NRFQ and LRKH…NLRS. Residues 142–151 show a composition bias toward low complexity; it reads QGSSSGSQRG. Residues 152 to 181 are compositionally biased toward basic and acidic residues; the sequence is SGDERRQHRERRVHREEREQEQDSRSDSRR. The Cupin type-1 1 domain maps to 186–344; it reads YHFSSNRFQT…TFNTRYEEIE (159 aa). Over residues 390 to 402 the composition is skewed to low complexity; that stretch reads SSSGEGKPSESGP. The region spanning 403-569 is the Cupin type-1 2 domain; the sequence is FNLRSNKPIY…TFPGSIEDVE (167 aa). N434 carries an N-linked (GlcNAc...) asparagine glycan. The interval 476-495 is disordered; the sequence is DQQRQQDEQEEEYEQGEEEV. Acidic residues predominate over residues 483 to 492; the sequence is EQEEEYEQGE. The N-linked (GlcNAc...) asparagine glycan is linked to N519. Residues 580–589 are compositionally biased toward low complexity; it reads FANAQPQQQQ. The interval 580–600 is disordered; the sequence is FANAQPQQQQQREKEGRRGRR.

This sequence belongs to the 7S seed storage protein family. As to quaternary structure, component of globulins complexes which accumulate in seeds.

Its function is as follows. Seed storage protein. Accumulates during seed development and is hydrolyzed after germination to provide a carbon and nitrogen source for the developing seedling. This Lupinus angustifolius (Narrow-leaved blue lupine) protein is Conglutin beta 1.